A 258-amino-acid chain; its full sequence is Imidazole glycerol phosphate synthase subunit HisF (258 aa).

Active-site residues include aspartate 11 and aspartate 130.

This sequence belongs to the HisA/HisF family. In terms of assembly, heterodimer of HisH and HisF.

It is found in the cytoplasm. It carries out the reaction 5-[(5-phospho-1-deoxy-D-ribulos-1-ylimino)methylamino]-1-(5-phospho-beta-D-ribosyl)imidazole-4-carboxamide + L-glutamine = D-erythro-1-(imidazol-4-yl)glycerol 3-phosphate + 5-amino-1-(5-phospho-beta-D-ribosyl)imidazole-4-carboxamide + L-glutamate + H(+). Its pathway is amino-acid biosynthesis; L-histidine biosynthesis; L-histidine from 5-phospho-alpha-D-ribose 1-diphosphate: step 5/9. IGPS catalyzes the conversion of PRFAR and glutamine to IGP, AICAR and glutamate. The HisF subunit catalyzes the cyclization activity that produces IGP and AICAR from PRFAR using the ammonia provided by the HisH subunit. In Cronobacter sakazakii (strain ATCC BAA-894) (Enterobacter sakazakii), this protein is Imidazole glycerol phosphate synthase subunit HisF.